We begin with the raw amino-acid sequence, 324 residues long: Acetyl-coenzyme A carboxylase carboxyl transferase subunit alpha (324 aa).

Residues 37 to 291 form the CoA carboxyltransferase C-terminal domain; sequence ILEDKLENLE…DLMIRKTFEQ (255 aa).

The protein belongs to the AccA family. As to quaternary structure, acetyl-CoA carboxylase is a heterohexamer composed of biotin carboxyl carrier protein (AccB), biotin carboxylase (AccC) and two subunits each of ACCase subunit alpha (AccA) and ACCase subunit beta (AccD).

The protein resides in the cytoplasm. The enzyme catalyses N(6)-carboxybiotinyl-L-lysyl-[protein] + acetyl-CoA = N(6)-biotinyl-L-lysyl-[protein] + malonyl-CoA. Its pathway is lipid metabolism; malonyl-CoA biosynthesis; malonyl-CoA from acetyl-CoA: step 1/1. In terms of biological role, component of the acetyl coenzyme A carboxylase (ACC) complex. First, biotin carboxylase catalyzes the carboxylation of biotin on its carrier protein (BCCP) and then the CO(2) group is transferred by the carboxyltransferase to acetyl-CoA to form malonyl-CoA. This chain is Acetyl-coenzyme A carboxylase carboxyl transferase subunit alpha, found in Bacillus cereus (strain G9842).